Here is a 130-residue protein sequence, read N- to C-terminus: Metastasis-suppressor KiSS-1 (130 aa).

The signal sequence occupies residues 1 to 19; sequence MISMASWQLLLLLCVATYG. Residues 49–82 are disordered; that stretch reads KESRYAESKPGSAGLRARRSSPCPPVEGPAGRQR. Cys-71 and Cys-85 are oxidised to a cystine. Tyr-110 is subject to Phosphotyrosine. The tract at residues 110 to 119 is essential for receptor binding and receptor activation; it reads YNWNSFGLRY. Position 119 is a tyrosine amide (Tyr-119).

This sequence belongs to the KISS1 family. As to expression, weak in all tissue types with highest levels in lung and 15- 17-day embryos. Expressed in areas of the hypothalamus implicated in the neuroendocrine regulation of gonadotropin secretion, including the anteroventral periventricular nucleus, the periventricular nucleus, and the arcuate nucleus.

It localises to the secreted. In terms of biological role, metastasis suppressor protein. May regulate events downstream of cell-matrix adhesion, perhaps involving cytoskeletal reorganization. Generates a C-terminally amidated peptide, metastin which functions as the endogenous ligand of the G-protein coupled receptor GPR54. Activation of the receptor inhibits cell proliferation and cell migration, key characteristics of tumor metastasis. The receptor is also essential for normal gonadotropin-released hormone physiology and for puberty. The hypothalamic KiSS1/GPR54 system is a pivotal factor in central regulation of the gonadotropic axis at puberty and in adulthood. Intracerebroventricular administration induces an increase in serum LH and FSH levels in prepubertal male and female as well as in adult animals. In Mus musculus (Mouse), this protein is Metastasis-suppressor KiSS-1 (Kiss1).